Here is a 130-residue protein sequence, read N- to C-terminus: Small ribosomal subunit protein uS9 (130 aa).

Belongs to the universal ribosomal protein uS9 family.

The sequence is that of Small ribosomal subunit protein uS9 from Paracidovorax citrulli (strain AAC00-1) (Acidovorax citrulli).